Here is a 372-residue protein sequence, read N- to C-terminus: Serine/threonine-protein kinase 17B (372 aa).

In terms of domain architecture, Protein kinase spans 33–293 (TLTPKELGRG…AESCLSHSWL (261 aa)). Residues 39–47 (LGRGKFAVV) and lysine 62 contribute to the ATP site. Catalysis depends on aspartate 158, which acts as the Proton acceptor. Residues 305 to 348 (EETSGSSQIQDLTLRSSEEKTSKSSCNGSCGAREDKENIPEDGS) are disordered. The segment covering 307 to 319 (TSGSSQIQDLTLR) has biased composition (polar residues).

It belongs to the protein kinase superfamily. CAMK Ser/Thr protein kinase family. DAP kinase subfamily. As to quaternary structure, interacts with CHP1; the interaction induces CHP1 to translocate from the Golgi to the nucleus. In terms of processing, autophosphorylated.

It localises to the nucleus. It is found in the cell membrane. The protein resides in the endoplasmic reticulum-Golgi intermediate compartment. The enzyme catalyses L-seryl-[protein] + ATP = O-phospho-L-seryl-[protein] + ADP + H(+). The catalysed reaction is L-threonyl-[protein] + ATP = O-phospho-L-threonyl-[protein] + ADP + H(+). Functionally, acts as a positive regulator of apoptosis. Phosphorylates myosin light chains. This is Serine/threonine-protein kinase 17B (Stk17b) from Mus musculus (Mouse).